The following is a 584-amino-acid chain: ATP-dependent ubiquitin transferase-like protein Cap2 (584 aa).

Residues 1 to 137 form an E2-like domain region; that stretch reads MKQELHHTLL…SGTSNDVELE (137 aa). The active-site For E2-like domain is C90. The interval 138–338 is linker domain; sequence GEFSAYWQSE…LLSRNQSRPD (201 aa). The interval 339–584 is adenylation plus E1-like domain; the sequence is VGNLSQKRIA…RFSGCNICDE (246 aa). Catalysis depends on C522, which acts as the For E1-like domain.

In the C-terminal section; belongs to the HesA/MoeB/ThiF family. Interacts with CD-NTase DncV in the presence and absence of phage T2. A Cap2 dimer is bound on either side by a DncV monomer.

In terms of biological role, CD-NTase priming component of a CBASS antiviral system. CBASS (cyclic oligonucleotide-based antiphage signaling system) provides immunity against bacteriophages. The CD-NTase protein (DncV) synthesizes cyclic nucleotides in response to infection; these serve as specific second messenger signals. The signals activate a diverse range of effectors, leading to bacterial cell death and thus abortive phage infection. A type II-A(GA) CBASS system. Its function is as follows. Primes DncV; acts as a protein transferase, conjugating DncV, the CD-NTase, to unidentified target(s) in the cell via an E1-E2 ubiquitin transferase-like mechanism. During the conjugation reaction DncV is probably transiently attached to AMP. Protein conjugation requires ATP. Functionally, protects E.coli against phage infection. When the CBASS operon (capV-dncV-cap2-cap3) is introduced in E.coli MG1655 there is about 100-fold protection against phages P1 and T2. When the operon is introduced in E.coli MG1655 there is a more than 10(3) decrease in the efficiency of T2 plaque formation. Protects 100-fold against phage T5, offers no protection against T7. When the operon is introduced in E.coli MG1655 it protects against phages T2, T4, T5 and T6. Another paper shows the operon confers protection against phages P1, T2, T5 and T6 but not T4 or lambda. The sequence is that of ATP-dependent ubiquitin transferase-like protein Cap2 from Vibrio cholerae serotype O1 (strain ATCC 39315 / El Tor Inaba N16961).